The sequence spans 256 residues: Coiled-coil domain-containing protein 90B, mitochondrial (256 aa).

The transit peptide at Met1 to Ser42 directs the protein to the mitochondrion. Positions Ala106–Ala164 form a coiled coil. A helical membrane pass occupies residues Thr231–Trp253.

It belongs to the CCDC90 family. In terms of assembly, interacts with MCU.

Its subcellular location is the mitochondrion membrane. This chain is Coiled-coil domain-containing protein 90B, mitochondrial (Ccdc90b), found in Rattus norvegicus (Rat).